Here is a 126-residue protein sequence, read N- to C-terminus: Cytochrome c2 (126 aa).

C17, C20, H21, and M101 together coordinate heme c.

Belongs to the cytochrome c family. Binds 1 heme c group covalently per subunit.

It localises to the periplasm. Cytochrome c2 is found mainly in purple, non-sulfur, photosynthetic bacteria where it functions as the electron donor to the oxidized bacteriochlorophyll in the photophosphorylation pathway. However, it may also have a role in the respiratory chain and is found in some non-photosynthetic bacteria. The sequence is that of Cytochrome c2 from Rhodovulum adriaticum (Rhodopseudomonas adriatica).